We begin with the raw amino-acid sequence, 297 residues long: Thoeris protein ThsA (297 aa).

The next 2 membrane-spanning stretches (helical) occupy residues 32 to 52 and 57 to 77; these read ALSI…FLDL and RLII…VQFI.

The protein resides in the cell membrane. With respect to regulation, activated by a signal molecule generated by ThsB. Functionally, probable membrane protein component of the Thoeris antiviral defense system, composed of ThsA and ThsB. Expression of ThsA and ThsB in B.subtilis (strain BEST7003) confers resistance to phages SBSphiC, SBSphiJ and SPO1. Activation by a signal generated by ThsB leads to phage resistance. This chain is Thoeris protein ThsA, found in Bacillus amyloliquefaciens (strain Y2) (Bacillus amyloliquefaciens subsp. plantarum (strain B9601-Y2)).